The primary structure comprises 132 residues: Small ribosomal subunit protein uS11 (132 aa).

The interval 1 to 24 (MAAPKQAARKPRRRDRKSVPVGQA) is disordered. Residues 7 to 16 (AARKPRRRDR) show a composition bias toward basic residues.

This sequence belongs to the universal ribosomal protein uS11 family. Part of the 30S ribosomal subunit. Interacts with proteins S7 and S18. Binds to IF-3.

Located on the platform of the 30S subunit, it bridges several disparate RNA helices of the 16S rRNA. Forms part of the Shine-Dalgarno cleft in the 70S ribosome. This is Small ribosomal subunit protein uS11 from Bifidobacterium longum (strain DJO10A).